The chain runs to 240 residues: Ribosome maturation protein SDO1 homolog (240 aa).

The protein belongs to the SDO1/SBDS family.

In Methanocaldococcus jannaschii (strain ATCC 43067 / DSM 2661 / JAL-1 / JCM 10045 / NBRC 100440) (Methanococcus jannaschii), this protein is Ribosome maturation protein SDO1 homolog.